The primary structure comprises 190 residues: Recombination protein RecR (190 aa).

Residues 58 to 73 form a C4-type zinc finger; sequence CEQCGALSENELCEIC. In terms of domain architecture, Toprim spans 81-167; sequence NILCIVESPK…TFSKIAQGIP (87 aa).

Belongs to the RecR family.

Its function is as follows. May play a role in DNA repair. It seems to be involved in an RecBC-independent recombinational process of DNA repair. It may act with RecF and RecO. The sequence is that of Recombination protein RecR from Campylobacter jejuni subsp. jejuni serotype O:23/36 (strain 81-176).